Reading from the N-terminus, the 117-residue chain is UPF0375 protein Y45F10C.2 (117 aa).

The signal sequence occupies residues 1 to 20 (MNSFVSTVLLLSVTIALVSG).

The protein belongs to the UPF0375 family. Expressed in the uterine epithelium.

The protein resides in the secreted. Its function is as follows. Negatively regulates the egg-laying rate by promoting retention of fertilized eggs. This chain is UPF0375 protein Y45F10C.2, found in Caenorhabditis elegans.